Consider the following 152-residue polypeptide: Large ribosomal subunit protein uL13 (152 aa).

This sequence belongs to the universal ribosomal protein uL13 family. In terms of assembly, part of the 50S ribosomal subunit.

Its function is as follows. This protein is one of the early assembly proteins of the 50S ribosomal subunit, although it is not seen to bind rRNA by itself. It is important during the early stages of 50S assembly. This chain is Large ribosomal subunit protein uL13, found in Neorickettsia sennetsu (strain ATCC VR-367 / Miyayama) (Ehrlichia sennetsu).